Consider the following 500-residue polypeptide: Probable malate:quinone oxidoreductase (500 aa).

It belongs to the MQO family. FAD is required as a cofactor.

The enzyme catalyses (S)-malate + a quinone = a quinol + oxaloacetate. It functions in the pathway carbohydrate metabolism; tricarboxylic acid cycle; oxaloacetate from (S)-malate (quinone route): step 1/1. The polypeptide is Probable malate:quinone oxidoreductase (Bacillus anthracis (strain A0248)).